Reading from the N-terminus, the 184-residue chain is Photosystem I assembly protein Ycf4 (184 aa).

A run of 2 helical transmembrane segments spans residues 22 to 42 (VCWAFILFLGSLGFLLVGTSS) and 57 to 77 (IIFFPQGIVMSFYGIAGLFIS).

The protein belongs to the Ycf4 family.

The protein resides in the plastid. Its subcellular location is the chloroplast thylakoid membrane. Functionally, seems to be required for the assembly of the photosystem I complex. The protein is Photosystem I assembly protein Ycf4 of Morus indica (Mulberry).